We begin with the raw amino-acid sequence, 346 residues long: Small glutamine-rich tetratricopeptide repeat-containing protein 2 (346 aa).

TPR repeat units follow at residues 102–135, 136–169, 170–203, and 205–229; these read AEDL…LPTN, AIYY…DPSY, FRGY…EGDN, and TEAM…EKTV. Residues 219 to 249 are disordered; it reads VEQSLNLEKTVPEQSRDADVDASQGASAGGL. A compositionally biased stretch (basic and acidic residues) spans 228–237; the sequence is TVPEQSRDAD. Threonine 308 is subject to Phosphothreonine. The segment at 325 to 346 is disordered; it reads GNLFGGAGAQSTDETPDNENKQ.

Belongs to the SGT family. Interacts with HSC82, HSP104, MDY2, SSA1 and SSA2.

The protein localises to the cytoplasm. Its function is as follows. Co-chaperone that binds to the molecular chaperone Hsp70 (SSA1 and SSA2). Regulates Hsp70 ATPase activity. Required for recovery from heat shock. In Saccharomyces cerevisiae (strain ATCC 204508 / S288c) (Baker's yeast), this protein is Small glutamine-rich tetratricopeptide repeat-containing protein 2 (SGT2).